Consider the following 133-residue polypeptide: ATP synthase epsilon chain (133 aa).

Belongs to the ATPase epsilon chain family. In terms of assembly, F-type ATPases have 2 components, CF(1) - the catalytic core - and CF(0) - the membrane proton channel. CF(1) has five subunits: alpha(3), beta(3), gamma(1), delta(1), epsilon(1). CF(0) has three main subunits: a, b and c.

The protein resides in the cell membrane. Its function is as follows. Produces ATP from ADP in the presence of a proton gradient across the membrane. The chain is ATP synthase epsilon chain from Clostridium perfringens (strain ATCC 13124 / DSM 756 / JCM 1290 / NCIMB 6125 / NCTC 8237 / Type A).